Consider the following 364-residue polypeptide: Protein-glutamate methylesterase/protein-glutamine glutaminase 1 (364 aa).

One can recognise a Response regulatory domain in the interval 6-123 (KVLCVDDSAL…RDGMLDYSEK (118 aa)). Residue D57 is modified to 4-aspartylphosphate. The CheB-type methylesterase domain occupies 165 to 357 (LVSTEKLIIV…RRIMARLASM (193 aa)). Active-site residues include S177, H203, and D299.

It belongs to the CheB family. Phosphorylated by CheA. Phosphorylation of the N-terminal regulatory domain activates the methylesterase activity.

Its subcellular location is the cytoplasm. The enzyme catalyses [protein]-L-glutamate 5-O-methyl ester + H2O = L-glutamyl-[protein] + methanol + H(+). It carries out the reaction L-glutaminyl-[protein] + H2O = L-glutamyl-[protein] + NH4(+). Its function is as follows. Involved in chemotaxis. Part of a chemotaxis signal transduction system that modulates chemotaxis in response to various stimuli. Catalyzes the demethylation of specific methylglutamate residues introduced into the chemoreceptors (methyl-accepting chemotaxis proteins or MCP) by CheR. Also mediates the irreversible deamidation of specific glutamine residues to glutamic acid. This is Protein-glutamate methylesterase/protein-glutamine glutaminase 1 from Burkholderia mallei (strain ATCC 23344).